A 233-amino-acid chain; its full sequence is Small ribosomal subunit protein uS2 (233 aa).

This sequence belongs to the universal ribosomal protein uS2 family.

This Clostridium beijerinckii (strain ATCC 51743 / NCIMB 8052) (Clostridium acetobutylicum) protein is Small ribosomal subunit protein uS2.